Consider the following 152-residue polypeptide: CASP-like protein 5C3 (152 aa).

Residues 1–17 are Cytoplasmic-facing; that stretch reads MVEVPGSVGTTASLSLR. The helical transmembrane segment at 18 to 38 threads the bilayer; it reads LGQMVLAFGSLLFMTIGVRFY. At 39-42 the chain is on the extracellular side; the sequence is QFTA. A helical membrane pass occupies residues 43–63; it reads FCYLVTIMSLAIPWNLTLAMV. The Cytoplasmic segment spans residues 64–78; the sequence is DIYCVILQQPFQKPR. The chain crosses the membrane as a helical span at residues 79-99; sequence ILLAISIGDWVVSVLALASAS. Over 100 to 128 the chain is Extracellular; sequence SAASVVDILRSNESSCPPTICNRYQFAAT. The N-linked (GlcNAc...) asparagine glycan is linked to N111. The helical transmembrane segment at 129–149 threads the bilayer; that stretch reads LAFLTWFLSLSSSLFNLWLLP. Over 150–152 the chain is Cytoplasmic; the sequence is SLI.

It belongs to the Casparian strip membrane proteins (CASP) family. In terms of assembly, homodimer and heterodimers. In terms of tissue distribution, expressed in the floral organ abscission zone and flower buds.

Its subcellular location is the cell membrane. The chain is CASP-like protein 5C3 from Arabidopsis thaliana (Mouse-ear cress).